The sequence spans 24 residues: Brevinin-1GRa (24 aa).

In terms of tissue distribution, expressed by the skin glands.

It localises to the secreted. In terms of biological role, antimicrobial peptide active against the Gram-positive bacterium S.aureus (MIC=12.5 uM) and against the Gram-negative bacteria E.coli (MIC=25 uM). The chain is Brevinin-1GRa from Odorrana grahami (Yunnanfu frog).